Here is a 177-residue protein sequence, read N- to C-terminus: MTTATTNPSTYPNAMAVARYVGISASKARRVIDLVRGKSVEEALDILRWAPQQASEPVAKVIASAAANAQNNEGLDPSTLVVATIHADEGPTAKRIRPRAQGRAFRIRKRTSHITVIVESRPSREGRRGGAGESAGGARARRAQGSKAAAAKKAPASSSKKAATTTEASEEAKGGSQ.

The segment at 118–177 (VESRPSREGRRGGAGESAGGARARRAQGSKAAAAKKAPASSSKKAATTTEASEEAKGGSQ) is disordered. Residues 121 to 130 (RPSREGRRGG) are compositionally biased toward basic and acidic residues. Residues 145–167 (GSKAAAAKKAPASSSKKAATTTE) are compositionally biased toward low complexity.

This sequence belongs to the universal ribosomal protein uL22 family. In terms of assembly, part of the 50S ribosomal subunit.

This protein binds specifically to 23S rRNA; its binding is stimulated by other ribosomal proteins, e.g. L4, L17, and L20. It is important during the early stages of 50S assembly. It makes multiple contacts with different domains of the 23S rRNA in the assembled 50S subunit and ribosome. In terms of biological role, the globular domain of the protein is located near the polypeptide exit tunnel on the outside of the subunit, while an extended beta-hairpin is found that lines the wall of the exit tunnel in the center of the 70S ribosome. This chain is Large ribosomal subunit protein uL22, found in Mycobacterium sp. (strain KMS).